A 311-amino-acid chain; its full sequence is tRNA-cytidine(32) 2-sulfurtransferase (311 aa).

The PP-loop motif motif lies at 47-52 (SGGKDS). Residues C122, C125, and C213 each contribute to the [4Fe-4S] cluster site.

It belongs to the TtcA family. In terms of assembly, homodimer. The cofactor is Mg(2+). [4Fe-4S] cluster is required as a cofactor.

It localises to the cytoplasm. It carries out the reaction cytidine(32) in tRNA + S-sulfanyl-L-cysteinyl-[cysteine desulfurase] + AH2 + ATP = 2-thiocytidine(32) in tRNA + L-cysteinyl-[cysteine desulfurase] + A + AMP + diphosphate + H(+). Its pathway is tRNA modification. Functionally, catalyzes the ATP-dependent 2-thiolation of cytidine in position 32 of tRNA, to form 2-thiocytidine (s(2)C32). The sulfur atoms are provided by the cysteine/cysteine desulfurase (IscS) system. The polypeptide is tRNA-cytidine(32) 2-sulfurtransferase (Shigella flexneri serotype 5b (strain 8401)).